The chain runs to 525 residues: Arabinose import ATP-binding protein AraG 2 (525 aa).

A disordered region spans residues 1–25 (MTDTTIRARGAQAAGSPAGAGPLDA). The span at 7–25 (RARGAQAAGSPAGAGPLDA) shows a compositional bias: low complexity. ABC transporter domains lie at 35–270 (LELD…MVGR) and 281–524 (REPG…LALP). 67 to 74 (GENGAGKS) lines the ATP pocket.

The protein belongs to the ABC transporter superfamily. Arabinose importer (TC 3.A.1.2.2) family. In terms of assembly, the complex is composed of two ATP-binding proteins (AraG), two transmembrane proteins (AraH) and a solute-binding protein (AraF).

Its subcellular location is the cell inner membrane. It catalyses the reaction L-arabinose(out) + ATP + H2O = L-arabinose(in) + ADP + phosphate + H(+). In terms of biological role, part of the ABC transporter complex AraFGH involved in arabinose import. Responsible for energy coupling to the transport system. In Burkholderia thailandensis (strain ATCC 700388 / DSM 13276 / CCUG 48851 / CIP 106301 / E264), this protein is Arabinose import ATP-binding protein AraG 2.